A 139-amino-acid chain; its full sequence is Translation initiation factor 2 subunit beta (139 aa).

It belongs to the eIF-2-beta/eIF-5 family. Heterotrimer composed of an alpha, a beta and a gamma chain.

EIF-2 functions in the early steps of protein synthesis by forming a ternary complex with GTP and initiator tRNA. This chain is Translation initiation factor 2 subunit beta, found in Saccharolobus solfataricus (strain ATCC 35092 / DSM 1617 / JCM 11322 / P2) (Sulfolobus solfataricus).